The following is a 221-amino-acid chain: Glutathione S-transferase (221 aa).

The 81-residue stretch at 3–83 (GKPVLHYANT…YIAGKYNLYG (81 aa)) folds into the GST N-terminal domain. Glutathione is bound by residues Tyr9, Lys45, 54-55 (QV), and 67-68 (QT). Residues 85–208 (DLKERALIDM…QPGSQRKPRL (124 aa)) enclose the GST C-terminal domain.

It belongs to the GST superfamily. Alpha family. In terms of assembly, homodimer or heterodimer of GSTA1 and GSTA2.

It catalyses the reaction RX + glutathione = an S-substituted glutathione + a halide anion + H(+). The catalysed reaction is prostaglandin A2 + glutathione = prostaglandin A2-S-(R)-glutathione. The enzyme catalyses prostaglandin J2 + glutathione = prostaglandin J2-S-(R)-glutathione. It carries out the reaction (13S)-hydroperoxy-(9Z,11E)-octadecadienoate + 2 glutathione = (13S)-hydroxy-(9Z,11E)-octadecadienoate + glutathione disulfide + H2O. It catalyses the reaction androst-5-ene-3,17-dione = androst-4-ene-3,17-dione. In terms of biological role, glutathione S-transferase that catalyzes the nucleophilic attack of the sulfur atom of glutathione on the electrophilic groups of a wide range of exogenous and endogenous compounds. Involved in the formation of glutathione conjugates of both prostaglandin A2 (PGA2) and prostaglandin J2 (PGJ2). It also catalyzes the isomerization of D5-androstene-3,17-dione (AD) into D4-androstene-3,17-dione and may therefore play an important role in hormone biosynthesis. Through its glutathione-dependent peroxidase activity toward the fatty acid hydroperoxide (13S)-hydroperoxy-(9Z,11E)-octadecadienoate/13-HPODE it is also involved in the metabolism of oxidized linoleic acid. The chain is Glutathione S-transferase from Gallus gallus (Chicken).